A 312-amino-acid chain; its full sequence is Malate dehydrogenase (312 aa).

Residues 7-13 (GAAGGIG) and aspartate 34 contribute to the NAD(+) site. Residues arginine 81 and arginine 87 each coordinate substrate. NAD(+)-binding positions include asparagine 94 and 117-119 (ITN). Substrate contacts are provided by asparagine 119 and arginine 153. Histidine 177 acts as the Proton acceptor in catalysis. Position 227 (methionine 227) interacts with NAD(+).

Belongs to the LDH/MDH superfamily. MDH type 1 family. Homodimer.

It carries out the reaction (S)-malate + NAD(+) = oxaloacetate + NADH + H(+). Catalyzes the reversible oxidation of malate to oxaloacetate. The protein is Malate dehydrogenase of Shigella flexneri serotype 5b (strain 8401).